Consider the following 115-residue polypeptide: Holo-[acyl-carrier-protein] synthase (115 aa).

Residues Asp-6 and Glu-51 each contribute to the Mg(2+) site.

Belongs to the P-Pant transferase superfamily. AcpS family. The cofactor is Mg(2+).

The protein resides in the cytoplasm. It carries out the reaction apo-[ACP] + CoA = holo-[ACP] + adenosine 3',5'-bisphosphate + H(+). Functionally, transfers the 4'-phosphopantetheine moiety from coenzyme A to a Ser of acyl-carrier-protein. In Campylobacter jejuni subsp. jejuni serotype O:23/36 (strain 81-176), this protein is Holo-[acyl-carrier-protein] synthase.